Consider the following 102-residue polypeptide: NADH-quinone oxidoreductase subunit K (102 aa).

Transmembrane regions (helical) follow at residues Leu5 to Leu25, Ile31 to Phe51, and Val62 to Leu82.

The protein belongs to the complex I subunit 4L family. NDH-1 is composed of 14 different subunits. Subunits NuoA, H, J, K, L, M, N constitute the membrane sector of the complex.

The protein localises to the cell inner membrane. The enzyme catalyses a quinone + NADH + 5 H(+)(in) = a quinol + NAD(+) + 4 H(+)(out). NDH-1 shuttles electrons from NADH, via FMN and iron-sulfur (Fe-S) centers, to quinones in the respiratory chain. The immediate electron acceptor for the enzyme in this species is believed to be ubiquinone. Couples the redox reaction to proton translocation (for every two electrons transferred, four hydrogen ions are translocated across the cytoplasmic membrane), and thus conserves the redox energy in a proton gradient. The sequence is that of NADH-quinone oxidoreductase subunit K from Paracidovorax citrulli (strain AAC00-1) (Acidovorax citrulli).